Reading from the N-terminus, the 578-residue chain is Protein RIK (578 aa).

Residues 1-34 (MTEDNDEARVPLSDSSTTNDASRTRQRRKRKWDK) form a disordered region. The 68-residue stretch at 206 to 273 (SSNVAARIRG…KSIDDAKRLA (68 aa)) folds into the KH domain. The segment covering 413–425 (ATSLSIPSDNASN) has biased composition (polar residues). Residues 413–578 (ATSLSIPSDN…DPDEPLTTRS (166 aa)) form a disordered region. Residues 472-492 (PPSPRSVMPPPPPKTIAPPPS) are compositionally biased toward pro residues. Composition is skewed to low complexity over residues 493-503 (KTMSPPSSKSM) and 510-521 (SKTMSPLSSKSM). Over residues 560-572 (YGDDEDDDDDPDE) the composition is skewed to acidic residues.

In terms of assembly, interacts with AS1. As to expression, expressed in vegetative tissues.

The protein localises to the nucleus. The polypeptide is Protein RIK (RIK) (Arabidopsis thaliana (Mouse-ear cress)).